A 229-amino-acid polypeptide reads, in one-letter code: Cytidylate kinase (229 aa).

7–15 (GPAGAGKSS) is an ATP binding site.

The protein belongs to the cytidylate kinase family. Type 1 subfamily.

It localises to the cytoplasm. It carries out the reaction CMP + ATP = CDP + ADP. The catalysed reaction is dCMP + ATP = dCDP + ADP. The protein is Cytidylate kinase of Rhodopirellula baltica (strain DSM 10527 / NCIMB 13988 / SH1).